Here is a 166-residue protein sequence, read N- to C-terminus: NAD(P)H-quinone oxidoreductase subunit I, chloroplastic (166 aa).

4Fe-4S ferredoxin-type domains follow at residues 55-84 and 95-124; these read GRIHFEFDKCIACEVCVRVCPIDLPVVDWK and LNYSIDFGICIFCGNCVEYCPTNCLSMTEE. Residues Cys-64, Cys-67, Cys-70, Cys-74, Cys-104, Cys-107, Cys-110, and Cys-114 each contribute to the [4Fe-4S] cluster site.

Belongs to the complex I 23 kDa subunit family. As to quaternary structure, NDH is composed of at least 16 different subunits, 5 of which are encoded in the nucleus. It depends on [4Fe-4S] cluster as a cofactor.

Its subcellular location is the plastid. The protein resides in the chloroplast thylakoid membrane. It carries out the reaction a plastoquinone + NADH + (n+1) H(+)(in) = a plastoquinol + NAD(+) + n H(+)(out). The catalysed reaction is a plastoquinone + NADPH + (n+1) H(+)(in) = a plastoquinol + NADP(+) + n H(+)(out). In terms of biological role, NDH shuttles electrons from NAD(P)H:plastoquinone, via FMN and iron-sulfur (Fe-S) centers, to quinones in the photosynthetic chain and possibly in a chloroplast respiratory chain. The immediate electron acceptor for the enzyme in this species is believed to be plastoquinone. Couples the redox reaction to proton translocation, and thus conserves the redox energy in a proton gradient. The chain is NAD(P)H-quinone oxidoreductase subunit I, chloroplastic from Chaenactis santolinoides (Santolina pincushion).